Reading from the N-terminus, the 241-residue chain is uncharacterized protein (241 aa).

Residues 84–216 (TVVSLVVCDL…APGPVVAGRD (133 aa)) enclose the GGDEF domain. Positions 215–241 (RDGEVVRLADSPPKSAHDRRRLRGNRP) are disordered. Residues 231–241 (HDRRRLRGNRP) are compositionally biased toward basic residues.

This is an uncharacterized protein from Streptomyces griseus.